Reading from the N-terminus, the 644-residue chain is Beta-mannosyltransferase 2 (644 aa).

Over 1–6 the chain is Cytoplasmic; that stretch reads MRTRLN. The helical transmembrane segment at 7-27 threads the bilayer; that stretch reads FLLLCIASVLSVIWIGVLLTW. Over 28–644 the chain is Extracellular; it reads NDNNLGGISL…NDKKDLKIRQ (617 aa). The N-linked (GlcNAc...) asparagine glycan is linked to Asn-484. Positions 512 to 644 form a coiled coil; the sequence is TRGEAERRRR…NDKKDLKIRQ (133 aa). The disordered stretch occupies residues 517–644; it reads ERRRRVAEER…NDKKDLKIRQ (128 aa).

It belongs to the BMT family.

Its subcellular location is the membrane. Functionally, beta-mannosyltransferase involved in cell wall biosynthesis. Initiates the beta-mannosylation of core N-linked glycans. The polypeptide is Beta-mannosyltransferase 2 (BMT2) (Komagataella phaffii (strain GS115 / ATCC 20864) (Yeast)).